The primary structure comprises 313 residues: MKVNLDRNSSGFCFGVQSTINVAEEKLRKEKGLYSLGDVVHNEVEVKRLEALGLITIDTPAFNELKNAPVLIRAHGEPPSTYETANRNNLTLTDTTCPVVAKLQRTASQLNELGYQIIIYGKHLHPEVIGINGHCQNRALIIKHADLSDPEETLPIDLSKKTALISQTTMDVSGFYELKKNLEKLFSKGGRETGPWAEVKSIGEAEPMPEFIFKDTICRQISNRNQKLQDFSRANERIIFVAGKKSSNGQVLYAICKEANPESHFIEDVEELQSEWFTTTQGKTVESIGVCGATSTPMWLLEKVANHIEAHYA.

Cysteine 13 is a binding site for [4Fe-4S] cluster. The (2E)-4-hydroxy-3-methylbut-2-enyl diphosphate site is built by histidine 41 and histidine 75. Residues histidine 41 and histidine 75 each coordinate dimethylallyl diphosphate. Positions 41 and 75 each coordinate isopentenyl diphosphate. Cysteine 97 lines the [4Fe-4S] cluster pocket. Histidine 125 lines the (2E)-4-hydroxy-3-methylbut-2-enyl diphosphate pocket. Histidine 125 provides a ligand contact to dimethylallyl diphosphate. Histidine 125 lines the isopentenyl diphosphate pocket. Glutamate 127 serves as the catalytic Proton donor. Threonine 168 lines the (2E)-4-hydroxy-3-methylbut-2-enyl diphosphate pocket. Cysteine 218 contributes to the [4Fe-4S] cluster binding site. (2E)-4-hydroxy-3-methylbut-2-enyl diphosphate-binding residues include serine 246, serine 247, asparagine 248, and serine 295. Dimethylallyl diphosphate is bound by residues serine 246, serine 247, asparagine 248, and serine 295. 4 residues coordinate isopentenyl diphosphate: serine 246, serine 247, asparagine 248, and serine 295.

The protein belongs to the IspH family. The cofactor is [4Fe-4S] cluster.

It catalyses the reaction isopentenyl diphosphate + 2 oxidized [2Fe-2S]-[ferredoxin] + H2O = (2E)-4-hydroxy-3-methylbut-2-enyl diphosphate + 2 reduced [2Fe-2S]-[ferredoxin] + 2 H(+). It carries out the reaction dimethylallyl diphosphate + 2 oxidized [2Fe-2S]-[ferredoxin] + H2O = (2E)-4-hydroxy-3-methylbut-2-enyl diphosphate + 2 reduced [2Fe-2S]-[ferredoxin] + 2 H(+). It participates in isoprenoid biosynthesis; dimethylallyl diphosphate biosynthesis; dimethylallyl diphosphate from (2E)-4-hydroxy-3-methylbutenyl diphosphate: step 1/1. It functions in the pathway isoprenoid biosynthesis; isopentenyl diphosphate biosynthesis via DXP pathway; isopentenyl diphosphate from 1-deoxy-D-xylulose 5-phosphate: step 6/6. Its function is as follows. Catalyzes the conversion of 1-hydroxy-2-methyl-2-(E)-butenyl 4-diphosphate (HMBPP) into a mixture of isopentenyl diphosphate (IPP) and dimethylallyl diphosphate (DMAPP). Acts in the terminal step of the DOXP/MEP pathway for isoprenoid precursor biosynthesis. In Chlorobium phaeovibrioides (strain DSM 265 / 1930) (Prosthecochloris vibrioformis (strain DSM 265)), this protein is 4-hydroxy-3-methylbut-2-enyl diphosphate reductase.